The primary structure comprises 363 residues: GDP-fucose transporter 1 (363 aa).

The next 8 membrane-spanning stretches (helical) occupy residues 33-55, 75-97, 110-129, 139-161, 166-184, 194-213, 226-248, and 263-285; these read FLLR…ISMV, VTFY…ATCC, LKVA…MITF, VPFY…YLLL, SFYA…WLGI, SLTG…LNAI, IWRL…MIVL, and AHFW…VTGL.

Belongs to the TPT transporter family. SLC35C subfamily.

The protein localises to the golgi apparatus membrane. It carries out the reaction GMP(out) + GDP-beta-L-fucose(in) = GMP(in) + GDP-beta-L-fucose(out). Functionally, antiporter specific for GDP-l-fucose and depending on the concomitant reverse transport of GMP. Involved in GDP-fucose import from the cytoplasm into the Golgi lumen. The protein is GDP-fucose transporter 1 (Slc35c1) of Mus musculus (Mouse).